We begin with the raw amino-acid sequence, 403 residues long: Protein STRICTOSIDINE SYNTHASE-LIKE 13 (403 aa).

The signal sequence occupies residues 1-42 (MEKKGQHGTYESMMTHHPILCIIALSVLFIAIDPFHMSPIGG). 2 N-linked (GlcNAc...) asparagine glycosylation sites follow: asparagine 66 and asparagine 206.

Belongs to the strictosidine synthase family.

Its subcellular location is the vacuole. In terms of biological role, required for the exine formation during pollen development. This is Protein STRICTOSIDINE SYNTHASE-LIKE 13 from Arabidopsis thaliana (Mouse-ear cress).